Here is a 572-residue protein sequence, read N- to C-terminus: 2-succinyl-5-enolpyruvyl-6-hydroxy-3-cyclohexene-1-carboxylate synthase (572 aa).

This sequence belongs to the TPP enzyme family. MenD subfamily. In terms of assembly, homodimer. Mg(2+) is required as a cofactor. Requires Mn(2+) as cofactor. It depends on thiamine diphosphate as a cofactor.

It catalyses the reaction isochorismate + 2-oxoglutarate + H(+) = 5-enolpyruvoyl-6-hydroxy-2-succinyl-cyclohex-3-ene-1-carboxylate + CO2. Its pathway is quinol/quinone metabolism; 1,4-dihydroxy-2-naphthoate biosynthesis; 1,4-dihydroxy-2-naphthoate from chorismate: step 2/7. It functions in the pathway quinol/quinone metabolism; menaquinone biosynthesis. In terms of biological role, catalyzes the thiamine diphosphate-dependent decarboxylation of 2-oxoglutarate and the subsequent addition of the resulting succinic semialdehyde-thiamine pyrophosphate anion to isochorismate to yield 2-succinyl-5-enolpyruvyl-6-hydroxy-3-cyclohexene-1-carboxylate (SEPHCHC). This is 2-succinyl-5-enolpyruvyl-6-hydroxy-3-cyclohexene-1-carboxylate synthase from Aeromonas salmonicida (strain A449).